A 565-amino-acid chain; its full sequence is Oxygen-dependent choline dehydrogenase (565 aa).

6–35 (DYIIVGAGSAGNTLATRLTEDASVSVLLLE) contacts FAD. Residues 182–203 (QQEGFGPMDRSVTKKGRRSSTA) are disordered. His-475 functions as the Proton acceptor in the catalytic mechanism.

This sequence belongs to the GMC oxidoreductase family. FAD is required as a cofactor.

The catalysed reaction is choline + A = betaine aldehyde + AH2. It catalyses the reaction betaine aldehyde + NAD(+) + H2O = glycine betaine + NADH + 2 H(+). It functions in the pathway amine and polyamine biosynthesis; betaine biosynthesis via choline pathway; betaine aldehyde from choline (cytochrome c reductase route): step 1/1. Involved in the biosynthesis of the osmoprotectant glycine betaine. Catalyzes the oxidation of choline to betaine aldehyde and betaine aldehyde to glycine betaine at the same rate. This is Oxygen-dependent choline dehydrogenase from Pseudomonas entomophila (strain L48).